A 462-amino-acid chain; its full sequence is Cysteine--tRNA ligase (462 aa).

A Zn(2+)-binding site is contributed by cysteine 28. Residues 30–40 (ITVYDLCHIGH) carry the 'HIGH' region motif. Residues cysteine 210, histidine 235, and glutamate 239 each coordinate Zn(2+). A 'KMSKS' region motif is present at residues 267-271 (KMSKS). Lysine 270 serves as a coordination point for ATP.

Belongs to the class-I aminoacyl-tRNA synthetase family. Monomer. The cofactor is Zn(2+).

The protein localises to the cytoplasm. It catalyses the reaction tRNA(Cys) + L-cysteine + ATP = L-cysteinyl-tRNA(Cys) + AMP + diphosphate. This chain is Cysteine--tRNA ligase, found in Erwinia tasmaniensis (strain DSM 17950 / CFBP 7177 / CIP 109463 / NCPPB 4357 / Et1/99).